Reading from the N-terminus, the 311-residue chain is 4-hydroxy-tetrahydrodipicolinate synthase (311 aa).

Thr51 lines the pyruvate pocket. Tyr140 acts as the Proton donor/acceptor in catalysis. Catalysis depends on Lys168, which acts as the Schiff-base intermediate with substrate. Position 209 (Ile209) interacts with pyruvate.

This sequence belongs to the DapA family. Homotetramer; dimer of dimers.

The protein localises to the cytoplasm. It carries out the reaction L-aspartate 4-semialdehyde + pyruvate = (2S,4S)-4-hydroxy-2,3,4,5-tetrahydrodipicolinate + H2O + H(+). Its pathway is amino-acid biosynthesis; L-lysine biosynthesis via DAP pathway; (S)-tetrahydrodipicolinate from L-aspartate: step 3/4. In terms of biological role, catalyzes the condensation of (S)-aspartate-beta-semialdehyde [(S)-ASA] and pyruvate to 4-hydroxy-tetrahydrodipicolinate (HTPA). The protein is 4-hydroxy-tetrahydrodipicolinate synthase of Streptococcus pneumoniae (strain Taiwan19F-14).